The following is a 71-amino-acid chain: LKHEDTNLSVSLTDSSVVSLYSGTVLFKSMHTLPTNARCPNLSVISATSGMSQCELSQSSMPWWCRSLVFS.

Belongs to the arrestin family. Adrenal, cerebral cortex, heart, liver, lung, pituitary and testis.

This chain is Arrestin-D (Dar), found in Rattus norvegicus (Rat).